A 1363-amino-acid chain; its full sequence is Spike glycoprotein (1363 aa).

The N-terminal stretch at 1-13 (MFLILLISLPTAF) is a signal peptide. Over 14-1307 (AVIGDLKCTT…GTYEYYVKWP (1294 aa)) the chain is Extracellular. The BetaCoV S1-NTD domain maps to 15 to 298 (VIGDLKCTTV…DFMSEIKCKT (284 aa)). 5 disulfide bridges follow: Cys21–Cys165, Cys160–Cys193, Cys172–Cys252, Cys286–Cys296, and Cys331–Cys356. N-linked (GlcNAc...) asparagine; by host glycosylation is found at Asn59 and Asn133. A glycan (N-linked (GlcNAc...) asparagine; by host) is linked at Asn198. Positions 329–617 (PDCNIEAWLN…DVNSGTTCST (289 aa)) constitute a BetaCoV S1-CTD domain. An N-linked (GlcNAc...) asparagine; by host glycan is attached at Asn359. 2 cysteine pairs are disulfide-bonded: Cys374-Cys427 and Cys386-Cys615. 7 N-linked (GlcNAc...) asparagine; by host glycosylation sites follow: Asn437, Asn649, Asn676, Asn696, Asn714, Asn739, and Asn788. Fusion peptide stretches follow at residues 914–935 (SAIE…VEAY) and 933–953 (EAYN…VQSY). Asn937 is a glycosylation site (N-linked (GlcNAc...) asparagine; by host). Cys938 and Cys949 form a disulfide bridge. A heptad repeat 1 region spans residues 1014–1064 (QKLIANAFNNALGAIQEGFDATNSALVKIQAVVNANAEALNNLLQQLSNRF). Residues 1043-1087 (QAVVNANAEALNNLLQQLSNRFGAISSSLQEILSRLDALEAQAQI) are a coiled coil. Residues Asn1194, Asn1224, Asn1234, Asn1253, Asn1267, and Asn1288 are each glycosylated (N-linked (GlcNAc...) asparagine; by host). Residues 1258-1296 (APDLSLDYINVTFLDLQDEMNRLQEAIKVLNQSYINLKD) are heptad repeat 2. A coiled-coil region spans residues 1269–1297 (TFLDLQDEMNRLQEAIKVLNQSYINLKDI). A helical transmembrane segment spans residues 1308–1328 (WYVWLLIGFAGVAMLVLLFFI). Over 1329–1363 (CCCTGCGTSCFKKCGGCCDDYTGHQELVIKTSHED) the chain is Cytoplasmic. Positions 1359–1363 (TSHED) match the KxHxx motif.

The protein belongs to the betacoronaviruses spike protein family. As to quaternary structure, homotrimer; each monomer consists of a S1 and a S2 subunit. The resulting peplomers protrude from the virus surface as spikes. Post-translationally, specific enzymatic cleavages in vivo yield mature proteins. The precursor is processed into S1 and S2 by host cell furin or another cellular protease to yield the mature S1 and S2 proteins. Additionally, a second cleavage leads to the release of a fusion peptide after viral attachment to host cell receptor. The cytoplasmic Cys-rich domain is palmitoylated. Spike glycoprotein is digested within host endosomes.

The protein localises to the virion membrane. The protein resides in the host endoplasmic reticulum-Golgi intermediate compartment membrane. Its subcellular location is the host cell membrane. Functionally, attaches the virion to the cell membrane by interacting with host receptor, initiating the infection. Its function is as follows. Mediates fusion of the virion and cellular membranes by acting as a class I viral fusion protein. Under the current model, the protein has at least three conformational states: pre-fusion native state, pre-hairpin intermediate state, and post-fusion hairpin state. During viral and target cell membrane fusion, the coiled coil regions (heptad repeats) assume a trimer-of-hairpins structure, positioning the fusion peptide in close proximity to the C-terminal region of the ectodomain. The formation of this structure appears to drive apposition and subsequent fusion of viral and target cell membranes. In terms of biological role, acts as a viral fusion peptide which is unmasked following S2 cleavage occurring upon virus endocytosis. This chain is Spike glycoprotein, found in Bovine coronavirus (strain 98TXSF-110-ENT) (BCoV-ENT).